A 136-amino-acid chain; its full sequence is Selenoprotein M (136 aa).

The N-terminal stretch at 1 to 19 (MWLPLPLLLGLLQLQPILS) is a signal peptide. Active-site nucleophile residues include Cys38 and Sec41. The cysteinyl-selenocysteine (Cys-Sec) cross-link spans 38–41 (CGGU). Residue Sec41 is a non-standard amino acid, selenocysteine. Residues 111–136 (SSPDAPVPAEFKMAPARASGDTKEDL) are disordered. The Prevents secretion from ER motif lies at 133 to 136 (KEDL).

This sequence belongs to the selenoprotein M/F family.

The protein resides in the endoplasmic reticulum. In terms of biological role, may function as a thiol-disulfide oxidoreductase that participates in disulfide bond formation. The polypeptide is Selenoprotein M (selenom) (Xenopus laevis (African clawed frog)).